We begin with the raw amino-acid sequence, 145 residues long: D-aminoacyl-tRNA deacylase (145 aa).

Residues 137–138 (GP) carry the Gly-cisPro motif, important for rejection of L-amino acids motif.

The protein belongs to the DTD family. In terms of assembly, homodimer.

It localises to the cytoplasm. It catalyses the reaction glycyl-tRNA(Ala) + H2O = tRNA(Ala) + glycine + H(+). The catalysed reaction is a D-aminoacyl-tRNA + H2O = a tRNA + a D-alpha-amino acid + H(+). In terms of biological role, an aminoacyl-tRNA editing enzyme that deacylates mischarged D-aminoacyl-tRNAs. Also deacylates mischarged glycyl-tRNA(Ala), protecting cells against glycine mischarging by AlaRS. Acts via tRNA-based rather than protein-based catalysis; rejects L-amino acids rather than detecting D-amino acids in the active site. By recycling D-aminoacyl-tRNA to D-amino acids and free tRNA molecules, this enzyme counteracts the toxicity associated with the formation of D-aminoacyl-tRNA entities in vivo and helps enforce protein L-homochirality. This Dinoroseobacter shibae (strain DSM 16493 / NCIMB 14021 / DFL 12) protein is D-aminoacyl-tRNA deacylase.